Here is a 171-residue protein sequence, read N- to C-terminus: Voltage-dependent P/Q-type calcium channel subunit alpha-1A (171 aa).

The chain crosses the membrane as a helical span at residues 1 to 11; the sequence is FVTVLGSITDI. The IV repeat unit spans residues 1 to 171; sequence FVTVLGSITD…LMLNLFVAVI (171 aa). At 12–18 the chain is on the extracellular side; the sequence is LVTEFGN. Residues 19-37 traverse the membrane as a helical segment; sequence NFINLSFLRLFRAARLIKL. Residues 38–56 are Cytoplasmic-facing; that stretch reads LRQGYTIRILLWTFVQSFK. Residues 57 to 76 form a helical membrane-spanning segment; the sequence is ALPYVCLLIAMLFFIYAIIG. Residues 77–143 are Extracellular-facing; it reads MQVFGNIGIE…ENSGIKEDEC (67 aa). The chain crosses the membrane as a helical span at residues 144-168; the sequence is GNEFAYFYFVSFIFLCSFLMLNLFV. At 169–171 the chain is on the cytoplasmic side; it reads AVI.

The protein belongs to the calcium channel alpha-1 subunit (TC 1.A.1.11) family. CACNA1A subfamily. Voltage-dependent calcium channels are multisubunit complexes, consisting of alpha-1, alpha-2, beta and delta subunits in a 1:1:1:1 ratio. The channel activity is directed by the pore-forming and voltage-sensitive alpha-1 subunit. In many cases, this subunit is sufficient to generate voltage-sensitive calcium channel activity. The auxiliary subunits beta and alpha-2/delta linked by a disulfide bridge regulate the channel activity.

It localises to the cell membrane. The enzyme catalyses Ca(2+)(in) = Ca(2+)(out). The isoform alpha-1A gives rise to P and/or Q-type calcium currents. P/Q-type calcium channels belong to the 'high-voltage activated' (HVA) group. In Gallus gallus (Chicken), this protein is Voltage-dependent P/Q-type calcium channel subunit alpha-1A (CACNA1A).